The primary structure comprises 320 residues: GTP 3',8-cyclase (320 aa).

The Radical SAM core domain occupies Gln-5–Ala-225. Arg-14 contacts GTP. Residues Cys-21 and Cys-25 each coordinate [4Fe-4S] cluster. Tyr-27 contacts S-adenosyl-L-methionine. Position 28 (Cys-28) interacts with [4Fe-4S] cluster. GTP is bound at residue Arg-64. Gly-68 contacts S-adenosyl-L-methionine. Position 95 (Thr-95) interacts with GTP. Residue Ser-119 participates in S-adenosyl-L-methionine binding. Residue Lys-155 coordinates GTP. An S-adenosyl-L-methionine-binding site is contributed by Met-189. Residues Cys-248 and Cys-251 each contribute to the [4Fe-4S] cluster site. Arg-253–Arg-255 contributes to the GTP binding site. Cys-265 lines the [4Fe-4S] cluster pocket.

Belongs to the radical SAM superfamily. MoaA family. Monomer and homodimer. [4Fe-4S] cluster serves as cofactor.

The catalysed reaction is GTP + AH2 + S-adenosyl-L-methionine = (8S)-3',8-cyclo-7,8-dihydroguanosine 5'-triphosphate + 5'-deoxyadenosine + L-methionine + A + H(+). It functions in the pathway cofactor biosynthesis; molybdopterin biosynthesis. Catalyzes the cyclization of GTP to (8S)-3',8-cyclo-7,8-dihydroguanosine 5'-triphosphate. The sequence is that of GTP 3',8-cyclase from Campylobacter jejuni subsp. jejuni serotype O:6 (strain 81116 / NCTC 11828).